Consider the following 377-residue polypeptide: Carboxynorspermidine/carboxyspermidine decarboxylase (377 aa).

Residue Lys-41 is modified to N6-(pyridoxal phosphate)lysine. Glu-238 and Asp-274 together coordinate substrate.

Belongs to the Orn/Lys/Arg decarboxylase class-II family. NspC subfamily. Homodimer. Requires pyridoxal 5'-phosphate as cofactor.

The protein localises to the cytoplasm. The catalysed reaction is carboxynorspermidine + H(+) = norspermidine + CO2. It catalyses the reaction carboxyspermidine + H(+) = spermidine + CO2. Dithiothreitol greatly stimulates activity, maximum stimulation being at 5-20 mM dithiothreitol concentration. Fe(3+), Fe(2+) and Mn(2+) severely inhibit activity (88%, 82% and 50%, respectively), whereas Zn(2+) has a slightly inhibitory effect (23%) and Mg(2+), Ca(2+), Cu(2+) and Cu(+) have no effect. Catalyzes the decarboxylation of carboxynorspermidine and carboxyspermidine. 2,3-diaminopropionic acid, 2,4-diaminobutyric acid, L-ornithine or L-lysine cannot serve as substrates. This Vibrio alginolyticus protein is Carboxynorspermidine/carboxyspermidine decarboxylase.